A 529-amino-acid chain; its full sequence is Listeriolysin O (529 aa).

The signal sequence occupies residues 1 to 24; it reads MKKIMLVFITLILVSLPIAQQTEA. Positions 35 to 54 are disordered; sequence SISSMAPPASPPASPKTPIE. A run of 4 beta stranded transmembrane segments spans residues 214-227, 234-243, 312-321, and 329-341; these read ESQL…AFKA, VNFGAISEGK, STKVKAAFDA, and SGDV…IKNS. Positions 483–493 match the Conserved undecapeptide motif; sequence ECTGLAWEWWR. The Cholesterol binding motif lies at 515 to 516; the sequence is TL.

It belongs to the cholesterol-dependent cytolysin family. As to quaternary structure, homooligomeric pore complex of 35 to 50 subunits; when inserted in the host membrane.

Its subcellular location is the secreted. It localises to the host membrane. The protein localises to the host cell membrane. With respect to regulation, activity of listeriolysin O is regulated on multiple levels. It should be high in the phagosome, thereby allowing escape of the bacteria from the phagosomal compartment. Then, once inside the host cytosol, the activity must be controlled to prevent lysis of the host plasma membrane and loss of the intracellular environment. A cholesterol-dependent toxin that causes cytolysis by forming pores in cholesterol containing host membranes. After binding to target membranes, the protein undergoes a major conformation change, leading to its insertion in the host membrane and formation of an oligomeric pore complex. Cholesterol is required for binding to host membranes, membrane insertion and pore formation; cholesterol binding is mediated by a Thr-Leu pair in the C-terminus. Acts as a major virulence factor required for the escape of bacteria from phagosomal vacuoles and entry into the host cytosol. Can be reversibly inactivated by oxidation. This Listeria monocytogenes serotype 1/2a (strain 08-5578) protein is Listeriolysin O (hly).